The chain runs to 430 residues: CinA-like protein (430 aa).

The protein belongs to the CinA family.

This is CinA-like protein from Mycobacterium tuberculosis (strain ATCC 25177 / H37Ra).